The following is an 81-amino-acid chain: A-kinase anchor protein 7 isoform alpha (81 aa).

Gly2 carries N-myristoyl glycine lipidation. The required for membrane localization stretch occupies residues 2–11 (GQLCCFPFAR). Residues Cys5 and Cys6 are each lipidated (S-palmitoyl cysteine). An RII-binding region spans residues 29–42 (LVRLSKRLVENAVL). Residues 49–81 (LEETQNKKQPGEGNSTKAEEGDRNGDGSDNNRK) form a disordered region. A compositionally biased stretch (basic and acidic residues) spans 65–81 (KAEEGDRNGDGSDNNRK).

Binds cAMP-dependent protein kinase (PKA). Interacts with PRKCA; only the cytoplasmic form is capable of interacting with PRKCA.

The protein resides in the lateral cell membrane. Its function is as follows. Targets the cAMP-dependent protein kinase (PKA) to the plasma membrane, and permits functional coupling to the L-type calcium channel. The membrane-associated form reduces epithelial sodium channel (ENaC) activity, whereas the free cytoplasmic form may negatively regulate ENaC channel feedback inhibition by intracellular sodium. This Mus musculus (Mouse) protein is A-kinase anchor protein 7 isoform alpha (Akap7).